We begin with the raw amino-acid sequence, 266 residues long: Dihydropteroate synthase (266 aa).

Residues 12–260 (AAIMGILNVT…DVKANQDIVA (249 aa)) enclose the Pterin-binding domain. Position 19 (Asn19) interacts with Mg(2+). Residues Thr59, Asp93, Asn112, Asp176, Lys212, and 248–250 (RVH) contribute to the (7,8-dihydropterin-6-yl)methyl diphosphate site.

This sequence belongs to the DHPS family. Homodimer or homotrimer. The cofactor is Mg(2+).

It carries out the reaction (7,8-dihydropterin-6-yl)methyl diphosphate + 4-aminobenzoate = 7,8-dihydropteroate + diphosphate. It participates in cofactor biosynthesis; tetrahydrofolate biosynthesis; 7,8-dihydrofolate from 2-amino-4-hydroxy-6-hydroxymethyl-7,8-dihydropteridine diphosphate and 4-aminobenzoate: step 1/2. Its function is as follows. Catalyzes the condensation of para-aminobenzoate (pABA) with 6-hydroxymethyl-7,8-dihydropterin diphosphate (DHPt-PP) to form 7,8-dihydropteroate (H2Pte), the immediate precursor of folate derivatives. The sequence is that of Dihydropteroate synthase (folP) from Streptococcus pyogenes serotype M6 (strain ATCC BAA-946 / MGAS10394).